The primary structure comprises 240 residues: Small ribosomal subunit protein uS2c (240 aa).

The protein belongs to the universal ribosomal protein uS2 family.

It localises to the plastid. The protein resides in the chloroplast. This Cycas taitungensis (Prince sago) protein is Small ribosomal subunit protein uS2c (rps2).